Reading from the N-terminus, the 123-residue chain is Holo-[acyl-carrier-protein] synthase (123 aa).

Mg(2+) is bound by residues Asp-9 and Glu-57.

It belongs to the P-Pant transferase superfamily. AcpS family. Mg(2+) serves as cofactor.

The protein localises to the cytoplasm. The enzyme catalyses apo-[ACP] + CoA = holo-[ACP] + adenosine 3',5'-bisphosphate + H(+). Its function is as follows. Transfers the 4'-phosphopantetheine moiety from coenzyme A to a Ser of acyl-carrier-protein. The protein is Holo-[acyl-carrier-protein] synthase of Streptomyces coelicolor (strain ATCC BAA-471 / A3(2) / M145).